Consider the following 407-residue polypeptide: Chorismate synthase (407 aa).

Residues arginine 40 and arginine 46 each coordinate NADP(+). Residues 140–142 (RSS), 261–262 (QA), glycine 305, 320–324 (KPIST), and arginine 346 contribute to the FMN site.

The protein belongs to the chorismate synthase family. Homotetramer. The cofactor is FMNH2.

The catalysed reaction is 5-O-(1-carboxyvinyl)-3-phosphoshikimate = chorismate + phosphate. Its pathway is metabolic intermediate biosynthesis; chorismate biosynthesis; chorismate from D-erythrose 4-phosphate and phosphoenolpyruvate: step 7/7. In terms of biological role, catalyzes the anti-1,4-elimination of the C-3 phosphate and the C-6 proR hydrogen from 5-enolpyruvylshikimate-3-phosphate (EPSP) to yield chorismate, which is the branch point compound that serves as the starting substrate for the three terminal pathways of aromatic amino acid biosynthesis. This reaction introduces a second double bond into the aromatic ring system. This is Chorismate synthase from Corynebacterium glutamicum (strain R).